A 487-amino-acid polypeptide reads, in one-letter code: Acetyl-coenzyme A carboxylase carboxyl transferase subunit beta, chloroplastic (487 aa).

The tract at residues 180-201 (SRNSSENEGSSKRTRTKGSDLT) is disordered. The CoA carboxyltransferase N-terminal domain maps to 218 to 487 (LWVQCENCYG…PLNQKSSKIK (270 aa)). Residues Cys-222, Cys-225, Cys-241, and Cys-244 each contribute to the Zn(2+) site. A C4-type zinc finger spans residues 222 to 244 (CENCYGLNYKKFLKSKMNICEQC).

This sequence belongs to the AccD/PCCB family. In terms of assembly, acetyl-CoA carboxylase is a heterohexamer composed of biotin carboxyl carrier protein, biotin carboxylase and 2 subunits each of ACCase subunit alpha and ACCase plastid-coded subunit beta (accD). The cofactor is Zn(2+).

The protein localises to the plastid. It is found in the chloroplast stroma. It catalyses the reaction N(6)-carboxybiotinyl-L-lysyl-[protein] + acetyl-CoA = N(6)-biotinyl-L-lysyl-[protein] + malonyl-CoA. Its pathway is lipid metabolism; malonyl-CoA biosynthesis; malonyl-CoA from acetyl-CoA: step 1/1. In terms of biological role, component of the acetyl coenzyme A carboxylase (ACC) complex. Biotin carboxylase (BC) catalyzes the carboxylation of biotin on its carrier protein (BCCP) and then the CO(2) group is transferred by the transcarboxylase to acetyl-CoA to form malonyl-CoA. This Atropa belladonna (Belladonna) protein is Acetyl-coenzyme A carboxylase carboxyl transferase subunit beta, chloroplastic.